A 500-amino-acid chain; its full sequence is Cytochrome P450 11B2, mitochondrial (500 aa).

The transit peptide at 1 to 24 (MALRVTADVWLARPWQCLHRTRAL) directs the protein to the mitochondrion. A 21-hydroxyprogesterone-binding site is contributed by F381. C447 provides a ligand contact to heme.

Belongs to the cytochrome P450 family. Requires heme as cofactor.

The protein resides in the mitochondrion inner membrane. It catalyses the reaction a steroid + 2 reduced [adrenodoxin] + O2 + 2 H(+) = an 11beta-hydroxysteroid + 2 oxidized [adrenodoxin] + H2O. It carries out the reaction 21-hydroxyprogesterone + 2 reduced [adrenodoxin] + O2 + 2 H(+) = corticosterone + 2 oxidized [adrenodoxin] + H2O. The catalysed reaction is corticosterone + 2 reduced [adrenodoxin] + O2 + 2 H(+) = 18-hydroxycorticosterone + 2 oxidized [adrenodoxin] + H2O. The enzyme catalyses 18-hydroxycorticosterone + 2 reduced [adrenodoxin] + O2 + 2 H(+) = aldosterone + 2 oxidized [adrenodoxin] + 2 H2O. It catalyses the reaction 11-deoxycortisol + 2 reduced [adrenodoxin] + O2 + 2 H(+) = cortisol + 2 oxidized [adrenodoxin] + H2O. It carries out the reaction 21-hydroxyprogesterone + 2 reduced [adrenodoxin] + O2 + 2 H(+) = 18-hydroxy-11-deoxycorticosterone + 2 oxidized [adrenodoxin] + H2O. The catalysed reaction is cortisol + 2 reduced [adrenodoxin] + O2 + 2 H(+) = 18-hydroxycortisol + 2 oxidized [adrenodoxin] + H2O. The enzyme catalyses 18-hydroxycortisol + 2 reduced [adrenodoxin] + O2 + 2 H(+) = 18-oxocortisol + 2 oxidized [adrenodoxin] + 2 H2O. The protein operates within steroid biosynthesis. In terms of biological role, a cytochrome P450 monooxygenase that catalyzes the biosynthesis of aldosterone, the main mineralocorticoid in the human body responsible for salt and water homeostasis, thus involved in blood pressure regulation, arterial hypertension, and the development of heart failure. Catalyzes three sequential oxidative reactions of 11-deoxycorticosterone (21-hydroxyprogesterone), namely 11-beta hydroxylation, followed by two successive oxidations at C18 yielding 18-hydroxy and then 18-oxo intermediates (that would not leave the enzyme active site during the consecutive hydroxylation reactions), ending with the formation of aldosterone. Can also produce 18-hydroxycortisol and 18-oxocortisol, derived from successive oxidations of cortisol at C18, normally found at very low levels, but significantly increased in primary aldosteronism, the most common form of secondary hypertension. Mechanistically, uses molecular oxygen inserting one oxygen atom into a substrate and reducing the second into a water molecule. Two electrons are provided by NADPH via a two-protein mitochondrial transfer system comprising flavoprotein FDXR (adrenodoxin/ferredoxin reductase) and nonheme iron-sulfur protein FDX1 or FDX2 (adrenodoxin/ferredoxin). Could also be involved in the androgen metabolic pathway. The polypeptide is Cytochrome P450 11B2, mitochondrial (Cyp11b2) (Mus musculus (Mouse)).